Consider the following 545-residue polypeptide: E3 ubiquitin-protein ligase ipaH9.8 (545 aa).

The interaction with target proteins stretch occupies residues 1–242 (MLPINNNFSL…YHGPRIYFSM (242 aa)). 8 LRR repeats span residues 57 to 77 (NSDELRLDRLNLSSLPDNLPA), 78 to 99 (QITLLNVSYNQLTNLPELPVTL), 100 to 117 (KKLYSASNKLSELPVLPP), 118 to 139 (ALESLQVQHNELENLPALPDSL), 140 to 157 (LTMNISYNEIVSLPSLPL), 158 to 179 (ALKNLRATRNFLTELPAFSEGN), 182 to 203 (VVREYFFDRNQISHIPESILNL), and 205 to 228 (NECSIHISDNPLSSHALQALQRLT). Residues 243–250 (SDGQQNTL) form a linker region. The interval 251 to 545 (HRPLADAVTA…SENGSQLHHS (295 aa)) is E3 ubiquitin-protein ligase catalytic domain. The region spanning 253-545 (PLADAVTAWF…SENGSQLHHS (293 aa)) is the NEL domain. Cys337 (glycyl thioester intermediate) is an active-site residue.

This sequence belongs to the LRR-containing bacterial E3 ligase family. In terms of assembly, also interacts with human and mouse U2AF1 (U2AF35). In terms of processing, ubiquitinated in the presence of host E1 ubiquitin-activating enzyme, E2 ubiquitin-conjugating enzyme and ubiquitin.

Its subcellular location is the secreted. The protein resides in the host cytoplasm. It is found in the host nucleus. It catalyses the reaction S-ubiquitinyl-[E2 ubiquitin-conjugating enzyme]-L-cysteine + [acceptor protein]-L-lysine = [E2 ubiquitin-conjugating enzyme]-L-cysteine + N(6)-ubiquitinyl-[acceptor protein]-L-lysine.. With respect to regulation, exists in an autoinhibited state in the absence of substrate protein, due to interactions of the leucine-rich repeats with NEL domain. Is activated upon binding to a substrate protein. Effector E3 ubiquitin ligase that interferes with host's ubiquitination pathway and modulates the acute inflammatory responses, thus facilitating bacterial colonization within the host cell. Interacts with IKBKG (NEMO) and TNIP1 (ABIN-1), a ubiquitin-binding adapter protein, which results in TNIP1-dependent 'Lys-27'-linked polyubiquitination of IKBKG. Consequently, polyubiquitinated IKBKG undergoes proteasome-dependent degradation, which perturbs NF-kappa-B activation during bacterial infection. Mediates polyubiquitination of host U2AF1, leading to its proteasomal degradation. Catalyzes 'Lys-48'-linked polyubiquitination and subsequent degradation of a subset of host guanylate-binding proteins (GBP1, GBP2, GBP4 and GBP6), thereby suppressing host cell defense. In contrast, host GBP3 and GBP7 are not ubiquitinated by IpaH9.8. Uses UBE2D2 (UBCH5B) as an E2 ubiquitin-conjugating enzyme. The sequence is that of E3 ubiquitin-protein ligase ipaH9.8 (ipaH9.8) from Shigella boydii serotype 4 (strain Sb227).